Here is a 166-residue protein sequence, read N- to C-terminus: Small ribosomal subunit protein bS6 (166 aa).

The tract at residues E97–E166 is disordered. The segment covering R105–A159 has biased composition (basic and acidic residues).

This sequence belongs to the bacterial ribosomal protein bS6 family.

Binds together with bS18 to 16S ribosomal RNA. This chain is Small ribosomal subunit protein bS6, found in Bradyrhizobium diazoefficiens (strain JCM 10833 / BCRC 13528 / IAM 13628 / NBRC 14792 / USDA 110).